Here is a 389-residue protein sequence, read N- to C-terminus: Very-long-chain 3-oxoacyl-CoA reductase (389 aa).

The helical transmembrane segment at 34–54 (IAVFLLAIGLFHVALKVVSYV) threads the bilayer. NADP(+) contacts are provided by V80, D134, N162, Y239, K243, V272, and S274. Catalysis depends on Y239, which acts as the Proton donor. K243 serves as the catalytic Lowers pKa of active site Tyr. The disordered stretch occupies residues 359–389 (QAAGGVADPKNTTAAREGYATESLKNETLKH).

It belongs to the short-chain dehydrogenases/reductases (SDR) family.

It is found in the endoplasmic reticulum membrane. It carries out the reaction a very-long-chain (3R)-3-hydroxyacyl-CoA + NADP(+) = a very-long-chain 3-oxoacyl-CoA + NADPH + H(+). It participates in lipid metabolism; fatty acid biosynthesis. In terms of biological role, component of the microsomal membrane bound fatty acid elongation system, which produces the 26-carbon very long-chain fatty acids (VLCFA) from palmitate. Catalyzes the reduction of the 3-ketoacyl-CoA intermediate that is formed in each cycle of fatty acid elongation. VLCFAs serve as precursors for ceramide and sphingolipids. The sequence is that of Very-long-chain 3-oxoacyl-CoA reductase from Yarrowia lipolytica (strain CLIB 122 / E 150) (Yeast).